A 280-amino-acid polypeptide reads, in one-letter code: Ribose-phosphate pyrophosphokinase (280 aa).

ATP-binding positions include 32-34 (DGE) and 89-90 (RQ). His122 and Asp160 together coordinate Mg(2+). Lys183 is an active-site residue. D-ribose 5-phosphate contacts are provided by residues Arg185, Asp209, and 213–217 (STGGT).

This sequence belongs to the ribose-phosphate pyrophosphokinase family. Class III (archaeal) subfamily. It depends on Mg(2+) as a cofactor.

It is found in the cytoplasm. It catalyses the reaction D-ribose 5-phosphate + ATP = 5-phospho-alpha-D-ribose 1-diphosphate + AMP + H(+). The protein operates within metabolic intermediate biosynthesis; 5-phospho-alpha-D-ribose 1-diphosphate biosynthesis; 5-phospho-alpha-D-ribose 1-diphosphate from D-ribose 5-phosphate (route I): step 1/1. Activated by Co(2+) and Ni(2+) ions, however Mg(2+) ion shows almost no significant effect on the activity. Equally inhibited by ADP, CTP and GTP, while dTTP and UTP are less inhibitory. Functionally, involved in the biosynthesis of the central metabolite phospho-alpha-D-ribosyl-1-pyrophosphate (PRPP) via the transfer of pyrophosphoryl group from ATP to 1-hydroxyl of ribose-5-phosphate (Rib-5-P). It can also use CTP and GTP as substrates in addition to ATP. The chain is Ribose-phosphate pyrophosphokinase from Thermococcus kodakarensis (strain ATCC BAA-918 / JCM 12380 / KOD1) (Pyrococcus kodakaraensis (strain KOD1)).